Consider the following 677-residue polypeptide: Methionine--tRNA ligase (677 aa).

Residues 15–25 (PYANGSIHLGH) carry the 'HIGH' region motif. 4 residues coordinate Zn(2+): Cys146, Cys149, Cys159, and Cys162. The 'KMSKS' region motif lies at 333 to 337 (KMSKS). Lys336 serves as a coordination point for ATP. Residues 575–677 (DFAKVDLRVA…AGAKPGHQVK (103 aa)) form the tRNA-binding domain.

Belongs to the class-I aminoacyl-tRNA synthetase family. MetG type 1 subfamily. Homodimer. Zn(2+) is required as a cofactor.

Its subcellular location is the cytoplasm. The catalysed reaction is tRNA(Met) + L-methionine + ATP = L-methionyl-tRNA(Met) + AMP + diphosphate. In terms of biological role, is required not only for elongation of protein synthesis but also for the initiation of all mRNA translation through initiator tRNA(fMet) aminoacylation. The chain is Methionine--tRNA ligase from Shigella boydii serotype 18 (strain CDC 3083-94 / BS512).